A 222-amino-acid polypeptide reads, in one-letter code: Ribosomal RNA large subunit methyltransferase E (222 aa).

5 residues coordinate S-adenosyl-L-methionine: glycine 64, tryptophan 66, aspartate 92, aspartate 108, and aspartate 133. The active-site Proton acceptor is lysine 173.

Belongs to the class I-like SAM-binding methyltransferase superfamily. RNA methyltransferase RlmE family.

It is found in the cytoplasm. It carries out the reaction uridine(2552) in 23S rRNA + S-adenosyl-L-methionine = 2'-O-methyluridine(2552) in 23S rRNA + S-adenosyl-L-homocysteine + H(+). In terms of biological role, specifically methylates the uridine in position 2552 of 23S rRNA at the 2'-O position of the ribose in the fully assembled 50S ribosomal subunit. The sequence is that of Ribosomal RNA large subunit methyltransferase E from Variovorax paradoxus (strain S110).